Consider the following 123-residue polypeptide: Ribonuclease P protein component 2 (123 aa).

This sequence belongs to the eukaryotic/archaeal RNase P protein component 2 family. Consists of a catalytic RNA component and at least 4 protein subunits.

It catalyses the reaction Endonucleolytic cleavage of RNA, removing 5'-extranucleotides from tRNA precursor.. Its function is as follows. Part of ribonuclease P, a protein complex that generates mature tRNA molecules by cleaving their 5'-ends. This Aeropyrum pernix (strain ATCC 700893 / DSM 11879 / JCM 9820 / NBRC 100138 / K1) protein is Ribonuclease P protein component 2.